Consider the following 506-residue polypeptide: AMP phosphorylase (506 aa).

AMP-binding positions include G167, 193–198 (SRAITG), and T202. D255 acts as the Proton donor in catalysis. The AMP site is built by S263 and K287.

Belongs to the thymidine/pyrimidine-nucleoside phosphorylase family. Type 2 subfamily.

The enzyme catalyses AMP + phosphate = alpha-D-ribose 1,5-bisphosphate + adenine. It catalyses the reaction CMP + phosphate = cytosine + alpha-D-ribose 1,5-bisphosphate. The catalysed reaction is UMP + phosphate = alpha-D-ribose 1,5-bisphosphate + uracil. Catalyzes the conversion of AMP and phosphate to adenine and ribose 1,5-bisphosphate (R15P). Exhibits phosphorylase activity toward CMP and UMP in addition to AMP. Functions in an archaeal AMP degradation pathway, together with R15P isomerase and RubisCO. The sequence is that of AMP phosphorylase from Methanosarcina acetivorans (strain ATCC 35395 / DSM 2834 / JCM 12185 / C2A).